We begin with the raw amino-acid sequence, 223 residues long: Large ribosomal subunit protein uL3 (223 aa).

The disordered stretch occupies residues 137–157; the sequence is GRASHGNSRSHNVPGSIGMAQ. Glutamine 157 carries the post-translational modification N5-methylglutamine.

It belongs to the universal ribosomal protein uL3 family. As to quaternary structure, part of the 50S ribosomal subunit. Forms a cluster with proteins L14 and L19. In terms of processing, methylated by PrmB.

Functionally, one of the primary rRNA binding proteins, it binds directly near the 3'-end of the 23S rRNA, where it nucleates assembly of the 50S subunit. This Burkholderia pseudomallei (strain 1106a) protein is Large ribosomal subunit protein uL3.